The sequence spans 242 residues: UDP-2,3-diacylglucosamine hydrolase (242 aa).

Mn(2+) is bound by residues D9, H11, D42, N79, and H114. 79-80 (NR) provides a ligand contact to substrate. 5 residues coordinate substrate: D122, S160, N164, K167, and H195. Residues H195 and H197 each contribute to the Mn(2+) site.

It belongs to the LpxH family. It depends on Mn(2+) as a cofactor.

It localises to the cell inner membrane. It carries out the reaction UDP-2-N,3-O-bis[(3R)-3-hydroxytetradecanoyl]-alpha-D-glucosamine + H2O = 2-N,3-O-bis[(3R)-3-hydroxytetradecanoyl]-alpha-D-glucosaminyl 1-phosphate + UMP + 2 H(+). Its pathway is glycolipid biosynthesis; lipid IV(A) biosynthesis; lipid IV(A) from (3R)-3-hydroxytetradecanoyl-[acyl-carrier-protein] and UDP-N-acetyl-alpha-D-glucosamine: step 4/6. Hydrolyzes the pyrophosphate bond of UDP-2,3-diacylglucosamine to yield 2,3-diacylglucosamine 1-phosphate (lipid X) and UMP by catalyzing the attack of water at the alpha-P atom. Involved in the biosynthesis of lipid A, a phosphorylated glycolipid that anchors the lipopolysaccharide to the outer membrane of the cell. In Shewanella loihica (strain ATCC BAA-1088 / PV-4), this protein is UDP-2,3-diacylglucosamine hydrolase.